The sequence spans 335 residues: GTPase Obg (335 aa).

An Obg domain is found at 1–159 (MKFVDSAKIS…YELEMELKLM (159 aa)). One can recognise an OBG-type G domain in the interval 160–323 (ADVGLVGFPN…LKDELWRQVS (164 aa)). GTP is bound by residues 166-173 (GFPNAGKS), 191-195 (FTTLV), 213-216 (DIPG), 280-283 (TKMD), and 304-306 (SSV). S173 and T193 together coordinate Mg(2+).

This sequence belongs to the TRAFAC class OBG-HflX-like GTPase superfamily. OBG GTPase family. In terms of assembly, monomer. Requires Mg(2+) as cofactor.

The protein resides in the cytoplasm. Functionally, an essential GTPase which binds GTP, GDP and possibly (p)ppGpp with moderate affinity, with high nucleotide exchange rates and a fairly low GTP hydrolysis rate. Plays a role in control of the cell cycle, stress response, ribosome biogenesis and in those bacteria that undergo differentiation, in morphogenesis control. This Chlorobaculum tepidum (strain ATCC 49652 / DSM 12025 / NBRC 103806 / TLS) (Chlorobium tepidum) protein is GTPase Obg.